The following is a 267-amino-acid chain: Membrane-associated protein Vipp1 (267 aa).

A coiled-coil region spans residues 26 to 156; it reads EKVLEQAVID…KANAELQQTL (131 aa). The disordered stretch occupies residues 224–252; the sequence is GTSAATPQLEAAPVDSSVPANNASQDDAV.

This sequence belongs to the PspA/Vipp/IM30 family.

Its subcellular location is the cell inner membrane. Its function is as follows. Required for thylakoid formation. In Synechocystis sp. (strain ATCC 27184 / PCC 6803 / Kazusa), this protein is Membrane-associated protein Vipp1.